The primary structure comprises 312 residues: 2-phospho-L-lactate transferase (312 aa).

7,8-didemethyl-8-hydroxy-5-deazariboflavin is bound by residues aspartate 50 and lysine 89.

This sequence belongs to the CofD family. In terms of assembly, homodimer. It depends on Mg(2+) as a cofactor.

It carries out the reaction (2S)-lactyl-2-diphospho-5'-guanosine + 7,8-didemethyl-8-hydroxy-5-deazariboflavin = oxidized coenzyme F420-0 + GMP + H(+). Its pathway is cofactor biosynthesis; coenzyme F420 biosynthesis. Functionally, catalyzes the transfer of the 2-phospholactate moiety from (2S)-lactyl-2-diphospho-5'-guanosine to 7,8-didemethyl-8-hydroxy-5-deazariboflavin (FO) with the formation of oxidized coenzyme F420-0 and GMP. This is 2-phospho-L-lactate transferase from Methanococcus vannielii (strain ATCC 35089 / DSM 1224 / JCM 13029 / OCM 148 / SB).